Here is a 391-residue protein sequence, read N- to C-terminus: Mannose-6-phosphate isomerase (391 aa).

4 residues coordinate Zn(2+): Gln97, His99, Glu134, and His255. Arg274 is an active-site residue. Lys280 carries the N6-acetyllysine modification.

Belongs to the mannose-6-phosphate isomerase type 1 family. Zn(2+) serves as cofactor.

The protein localises to the cytoplasm. It catalyses the reaction D-mannose 6-phosphate = D-fructose 6-phosphate. Its function is as follows. Involved in the conversion of glucose to GDP-L-fucose, which can be converted to L-fucose, a capsular polysaccharide. The chain is Mannose-6-phosphate isomerase (manA) from Shigella flexneri.